Reading from the N-terminus, the 64-residue chain is Large ribosomal subunit protein uL29 (64 aa).

The protein belongs to the universal ribosomal protein uL29 family.

The polypeptide is Large ribosomal subunit protein uL29 (Burkholderia mallei (strain NCTC 10247)).